Here is a 297-residue protein sequence, read N- to C-terminus: 4-hydroxy-tetrahydrodipicolinate synthase (297 aa).

Residue Thr47 participates in pyruvate binding. Tyr135 (proton donor/acceptor) is an active-site residue. Lys163 (schiff-base intermediate with substrate) is an active-site residue. A pyruvate-binding site is contributed by Ile205.

The protein belongs to the DapA family. Homotetramer; dimer of dimers.

Its subcellular location is the cytoplasm. It catalyses the reaction L-aspartate 4-semialdehyde + pyruvate = (2S,4S)-4-hydroxy-2,3,4,5-tetrahydrodipicolinate + H2O + H(+). The protein operates within amino-acid biosynthesis; L-lysine biosynthesis via DAP pathway; (S)-tetrahydrodipicolinate from L-aspartate: step 3/4. Catalyzes the condensation of (S)-aspartate-beta-semialdehyde [(S)-ASA] and pyruvate to 4-hydroxy-tetrahydrodipicolinate (HTPA). The sequence is that of 4-hydroxy-tetrahydrodipicolinate synthase from Dehalococcoides mccartyi (strain ATCC BAA-2266 / KCTC 15142 / 195) (Dehalococcoides ethenogenes (strain 195)).